A 178-amino-acid polypeptide reads, in one-letter code: HTH-type transcriptional regulator SutR (178 aa).

An HTH cro/C1-type domain is found at leucine 12–phenylalanine 66. The H-T-H motif DNA-binding region spans leucine 23–arginine 42. Residues glutamine 105 to serine 171 form the Cupin type-2 domain.

In terms of biological role, regulates the expression of 12-16 transcription units involved in various steps of sulfur utilization. Represses expression of pfkB, fliZ, cysE, ydcO and its own expression. Activates expression of ypfN. Acts by binding to SutR boxes. This is HTH-type transcriptional regulator SutR from Escherichia coli (strain K12).